A 220-amino-acid chain; its full sequence is Glutathione S-transferase 2 (220 aa).

Residues 2 to 88 form the GST N-terminal domain; the sequence is VVTLGYWDIR…YIARKHNMCG (87 aa). Residues 7–8, 43–46, K50, 59–60, and 72–73 each bind glutathione; these read YW, PSDW, NL, and QS. Positions 90–208 constitute a GST C-terminal domain; that stretch reads TEVEKQRVDV…RSGRFMKAPI (119 aa). Y116 is a binding site for substrate.

Belongs to the GST superfamily. Mu family. Homodimer.

Its subcellular location is the cytoplasm. It catalyses the reaction RX + glutathione = an S-substituted glutathione + a halide anion + H(+). In terms of biological role, conjugation of reduced glutathione to a wide number of exogenous and endogenous hydrophobic electrophiles. Participates in the formation of novel hepoxilin regioisomers. This Gallus gallus (Chicken) protein is Glutathione S-transferase 2 (GSTM2).